A 362-amino-acid chain; its full sequence is G-protein coupled receptor 4 (362 aa).

The Extracellular segment spans residues 1 to 8; the sequence is MGNRTLEG. Asparagine 3 is a glycosylation site (N-linked (GlcNAc...) asparagine). Residues 9–45 traverse the membrane as a helical segment; it reads CHVDSRMDHLFPPSLYIFVIGVGLPTNCLALWAAYRQ. Disulfide bonds link cysteine 9–cysteine 258 and cysteine 90–cysteine 168. Residues 46-49 are Cytoplasmic-facing; sequence VRQR. The chain crosses the membrane as a helical span at residues 50 to 80; sequence NELGVYLMNLSIADLLYICTLPLWVDYFLHH. At 81-85 the chain is on the extracellular side; the sequence is DNWIH. The helical transmembrane segment at 86–121 threads the bilayer; that stretch reads GPGSCKLFGFIFYTNIYISIAFLCCISVDRYLAVAH. The Cytoplasmic segment spans residues 122–129; it reads PLRFARLR. Residues 130–156 traverse the membrane as a helical segment; sequence RVKTAVAVSSVVWATELGANSAPLFHD. At 157–172 the chain is on the extracellular side; that stretch reads ELFRDRYNHTFCFEKF. The extracellular loop 2 (ECL2) stretch occupies residues 157–172; sequence ELFRDRYNHTFCFEKF. The N-linked (GlcNAc...) asparagine glycan is linked to asparagine 164. A helical transmembrane segment spans residues 173 to 210; that stretch reads PMEGWVAWMNLYRVFVGFLFPWALMLLSYRGILRAVRG. Topologically, residues 211-214 are cytoplasmic; the sequence is SVST. Residues 215 to 250 form a helical membrane-spanning segment; that stretch reads ERQEKVKIKRLALSLIAIVLVCFAPYHVLLLSRSAV. The Extracellular portion of the chain corresponds to 251 to 260; it reads YLRRPRDCGF. A helical membrane pass occupies residues 261 to 289; the sequence is EERVFSAYHSSLAFTSLNCVADPILYCLV. Residues 290–362 lie on the Cytoplasmic side of the membrane; the sequence is NEGARSDVAK…VQLKMLPPAQ (73 aa).

The protein belongs to the G-protein coupled receptor 1 family.

Its subcellular location is the cell membrane. Activated by a network of residues that connects an extracellular-facing cavity to Glu-145, a conserved charged residue buried in the transmembrane core of the receptor. Protonation likely drives conformational changes in extracellular loop 2 (ECL2), which stabilizes movement of transmembrane 3 (TM3) and a series of rearrangements that connect the extracellular-facing cavity to Glu-145, a residue only conserved in proton-sensing G-protein coupled receptors. Its function is as follows. Proton-sensing G-protein coupled receptor activated by extracellular pH, which is required to monitor pH changes and generate adaptive reactions. Activated by an optimal pH of 6.8-7.2. Ligand binding causes a conformation change that triggers signaling via guanine nucleotide-binding proteins (G proteins) and modulates the activity of downstream effectors, such as adenylate cyclase. GPR4 is mainly coupled to G(s) G proteins and mediates activation of adenylate cyclase activity. May also couple with G(q) and G(12)/G(13) G proteins. Acts as a key regulator of respiratory sensitivity to CO2/H(+) in brain retrotrapezoid nucleus neurons: acts by mediating detection of protons generated by the formation of carbonic acid in the blood, an important mechanism to impulse to breathe. Also acts as a regulator of acid secretion in the kidney collecting duct by maintaining acid-base homeostasis in the kidney. Acidosis-induced GPR4 activation increases paracellular gap formation and permeability of vascular endothelial cells, possibly through the G(12)/G(13)/Rho GTPase signaling pathway. In Bos taurus (Bovine), this protein is G-protein coupled receptor 4 (GPR4).